A 127-amino-acid chain; its full sequence is Glycine cleavage system H protein (127 aa).

One can recognise a Lipoyl-binding domain in the interval 24-105 (TVKVGISDHA…PYEAWLFAVR (82 aa)). Lys65 is modified (N6-lipoyllysine).

It belongs to the GcvH family. In terms of assembly, the glycine cleavage system is composed of four proteins: P, T, L and H. It depends on (R)-lipoate as a cofactor.

Its function is as follows. The glycine cleavage system catalyzes the degradation of glycine. The H protein shuttles the methylamine group of glycine from the P protein to the T protein. In Methylococcus capsulatus (strain ATCC 33009 / NCIMB 11132 / Bath), this protein is Glycine cleavage system H protein.